A 218-amino-acid chain; its full sequence is Small ribosomal subunit protein uS7 (218 aa).

Belongs to the universal ribosomal protein uS7 family. In terms of assembly, part of the 30S ribosomal subunit.

Functionally, one of the primary rRNA binding proteins, it binds directly to 16S rRNA where it nucleates assembly of the head domain of the 30S subunit. Is located at the subunit interface close to the decoding center. This chain is Small ribosomal subunit protein uS7 (rps7), found in Pyrococcus horikoshii (strain ATCC 700860 / DSM 12428 / JCM 9974 / NBRC 100139 / OT-3).